The following is a 561-amino-acid chain: Mercuric reductase (561 aa).

Positions 2–65 constitute an HMA domain; sequence THLKITGMTC…AVAGLGYKAT (64 aa). A metal cation-binding residues include C11 and C14. FAD is bound by residues A110, G130, and T135. C136 and C141 are disulfide-bonded. Positions 145, 211, 403, and 411 each coordinate FAD. Hg(2+) contacts are provided by C558 and C559.

Belongs to the class-I pyridine nucleotide-disulfide oxidoreductase family. Homodimer. The cofactor is FAD.

The catalysed reaction is Hg + NADP(+) + H(+) = Hg(2+) + NADPH. Its function is as follows. Resistance to Hg(2+) in bacteria appears to be governed by a specialized system which includes mercuric reductase. MerA protein is responsible for volatilizing mercury as Hg(0). Plays a pivotal role in mercury resistance under thiol-depleted conditions and cell protection. Protects cells under thiol-depleted conditions. This chain is Mercuric reductase (merA), found in Pseudomonas aeruginosa.